Consider the following 152-residue polypeptide: UPF0225 protein YchJ (152 aa).

This sequence belongs to the UPF0225 family.

This is UPF0225 protein YchJ from Escherichia coli O6:K15:H31 (strain 536 / UPEC).